Consider the following 592-residue polypeptide: Threonine dehydratase biosynthetic, chloroplastic (592 aa).

The transit peptide at 1 to 91 directs the protein to the chloroplast; sequence MNSVQLPTAQ…NEAENGSIAE (91 aa). At K141 the chain carries N6-(pyridoxal phosphate)lysine. 2 ACT-like domains span residues 419–490 and 512–583; these read AVLA…NLTT and VLCR…LVSD.

Belongs to the serine/threonine dehydratase family. The cofactor is pyridoxal 5'-phosphate.

It localises to the plastid. The protein localises to the chloroplast. It carries out the reaction L-threonine = 2-oxobutanoate + NH4(+). It functions in the pathway amino-acid biosynthesis; L-isoleucine biosynthesis; 2-oxobutanoate from L-threonine: step 1/1. Allosterically inhibited by isoleucine. Strain GM11b is isoleucine feedback insensitive and is resistant to the antimetabolite L-O-methylthreonine. Catalyzes the formation of alpha-ketobutyrate from threonine in a two-step reaction. The first step is a dehydration of threonine, followed by rehydration and liberation of ammonia. In Arabidopsis thaliana (Mouse-ear cress), this protein is Threonine dehydratase biosynthetic, chloroplastic (OMR1).